Here is a 488-residue protein sequence, read N- to C-terminus: Ribulose bisphosphate carboxylase large chain 1 (488 aa).

Asn-128 and Thr-178 together coordinate substrate. The active-site Proton acceptor is the Lys-180. Residue Lys-182 participates in substrate binding. 3 residues coordinate Mg(2+): Lys-206, Asp-208, and Glu-209. Lys-206 carries the N6-carboxylysine modification. His-298 functions as the Proton acceptor in the catalytic mechanism. 3 residues coordinate substrate: Arg-299, His-331, and Ser-383.

Belongs to the RuBisCO large chain family. Type I subfamily. As to quaternary structure, heterohexadecamer of 8 large chains and 8 small chains. Mg(2+) is required as a cofactor.

It catalyses the reaction 2 (2R)-3-phosphoglycerate + 2 H(+) = D-ribulose 1,5-bisphosphate + CO2 + H2O. It carries out the reaction D-ribulose 1,5-bisphosphate + O2 = 2-phosphoglycolate + (2R)-3-phosphoglycerate + 2 H(+). RuBisCO catalyzes two reactions: the carboxylation of D-ribulose 1,5-bisphosphate, the primary event in carbon dioxide fixation, as well as the oxidative fragmentation of the pentose substrate. Both reactions occur simultaneously and in competition at the same active site. This chain is Ribulose bisphosphate carboxylase large chain 1, found in Nitrobacter hamburgensis (strain DSM 10229 / NCIMB 13809 / X14).